The chain runs to 377 residues: Endoplasmic reticulum-Golgi intermediate compartment protein 2 (377 aa).

Residues 1–33 (MRRLNRRKTLSLVKELDAFPKVPDSYVETSASG) are Cytoplasmic-facing. The chain crosses the membrane as a helical span at residues 34–54 (GTVSLIAFTTMALLTIMEFSV). The Lumenal segment spans residues 55–319 (YQDTWMKYEY…PFWQFFVRLC (265 aa)). The helical transmembrane segment at 320-340 (GIIGGIFSTTGMLHGIGKFIV) threads the bilayer. Topologically, residues 341–377 (EIICCRFRLGSYKPVRSVPFADGHTDNHLPLLENNTH) are cytoplasmic.

The protein belongs to the ERGIC family. In terms of assembly, may form a heteromeric complex composed of ERGIC1, ERGIC2 and ERGIC3. Interacts with ERGIC3, the interaction is required for the stable expression of both proteins. May interact with EEF1A1.

The protein resides in the endoplasmic reticulum-Golgi intermediate compartment membrane. The protein localises to the golgi apparatus. It localises to the cis-Golgi network membrane. Its subcellular location is the endoplasmic reticulum membrane. It is found in the cytoplasm. The protein resides in the nucleus. Its function is as follows. Possible role in transport between endoplasmic reticulum and Golgi. This is Endoplasmic reticulum-Golgi intermediate compartment protein 2 (Ergic2) from Mus musculus (Mouse).